A 553-amino-acid chain; its full sequence is Phospholipase-B 81 (553 aa).

A signal peptide spans 1 to 35 (MVRFGSAASSDNRRRRCWSWYWGGLLLLWAVAETR). Asn-69, Asn-313, Asn-416, and Asn-531 each carry an N-linked (GlcNAc...) asparagine glycan.

The protein belongs to the phospholipase B-like family. In terms of tissue distribution, expressed by the venom gland.

It localises to the secreted. Functionally, may cause hemolysis. This Drysdalia coronoides (White-lipped snake) protein is Phospholipase-B 81.